The following is a 126-amino-acid chain: Thioredoxin H-type 1 (126 aa).

Residues 2–120 enclose the Thioredoxin domain; the sequence is AANDATSSEE…LQQTIVKHAA (119 aa). Catalysis depends on nucleophile residues Cys46 and Cys49. The cysteines at positions 46 and 49 are disulfide-linked.

The protein belongs to the thioredoxin family. Plant H-type subfamily.

Its subcellular location is the cytoplasm. In terms of biological role, participates in various redox reactions through the reversible oxidation of the active center dithiol to a disulfide. The H form is known to activate a number of cytosolic enzymes. The sequence is that of Thioredoxin H-type 1 from Nicotiana tabacum (Common tobacco).